The sequence spans 403 residues: S-adenosylmethionine synthase (403 aa).

Residue His-17 participates in ATP binding. Asp-19 provides a ligand contact to Mg(2+). Glu-45 contributes to the K(+) binding site. Residues Glu-58 and Gln-104 each coordinate L-methionine. Residues 104–114 (QSPDIAQGVDT) form a flexible loop region. Residues 179–181 (DGK), 250–251 (KF), Asp-259, 265–266 (RK), Ala-282, and Lys-286 contribute to the ATP site. Residue Asp-259 participates in L-methionine binding. An L-methionine-binding site is contributed by Lys-290.

Belongs to the AdoMet synthase family. In terms of assembly, homotetramer; dimer of dimers. Mg(2+) is required as a cofactor. Requires K(+) as cofactor.

The protein localises to the cytoplasm. It carries out the reaction L-methionine + ATP + H2O = S-adenosyl-L-methionine + phosphate + diphosphate. It functions in the pathway amino-acid biosynthesis; S-adenosyl-L-methionine biosynthesis; S-adenosyl-L-methionine from L-methionine: step 1/1. Functionally, catalyzes the formation of S-adenosylmethionine (AdoMet) from methionine and ATP. The overall synthetic reaction is composed of two sequential steps, AdoMet formation and the subsequent tripolyphosphate hydrolysis which occurs prior to release of AdoMet from the enzyme. In Mycobacterium avium (strain 104), this protein is S-adenosylmethionine synthase.